A 761-amino-acid chain; its full sequence is Prolyl endopeptidase FAP (761 aa).

Over 1-4 (MKTW) the chain is Cytoplasmic. A helical; Signal-anchor for type II membrane protein transmembrane segment spans residues 5 to 25 (LKTVFGVTTLAALALVVICIV). The Extracellular portion of the chain corresponds to 26–761 (LRPSRVYKPE…FLKQCFSLSD (736 aa)). Asparagine 49, asparagine 92, and asparagine 99 each carry an N-linked (GlcNAc...) asparagine glycan. 2 residues coordinate substrate: glutamate 203 and glutamate 204. Residues asparagine 227 and asparagine 314 are each glycosylated (N-linked (GlcNAc...) asparagine). Disulfide bonds link cysteine 321-cysteine 332, cysteine 438-cysteine 441, and cysteine 448-cysteine 466. Serine 624 (charge relay system) is an active-site residue. The cysteines at positions 643 and 756 are disulfide-linked. N-linked (GlcNAc...) asparagine glycosylation is present at asparagine 679. Active-site charge relay system residues include aspartate 702 and histidine 734.

This sequence belongs to the peptidase S9B family. Homodimer; homodimerization is required for activity of both plasma membrane and soluble forms. The monomer is inactive. Heterodimer with DPP4. Interacts with PLAUR; the interaction occurs at the cell surface of invadopodia membranes. Interacts with ITGB1. Interacts with ITGA3. Associates with integrin alpha-3/beta-1; the association occurs in a collagen-dependent manner at the cell surface of invadopodia membranes. Post-translationally, N-glycosylated. In terms of processing, the N-terminus may be blocked. Expressed strongly in uterus, pancreas, submaxillary gland and skin, less in lymph node, ovary, skeletal muscle, adrenal and bone marrow. Expressed in reactive stromal fibroblast in epithelial cancers. Expressed in melanocytes but not melanomas (at protein level). Detected in fibroblasts, in placenta, uterus, embryos from day 7-19 and in newborn mice (P1).

The protein resides in the cell surface. Its subcellular location is the cell membrane. It is found in the cell projection. The protein localises to the lamellipodium membrane. It localises to the invadopodium membrane. The protein resides in the ruffle membrane. Its subcellular location is the membrane. It is found in the secreted. It carries out the reaction Hydrolysis of Pro-|-Xaa &gt;&gt; Ala-|-Xaa in oligopeptides.. The catalysed reaction is Release of an N-terminal dipeptide, Xaa-Yaa-|-Zaa-, from a polypeptide, preferentially when Yaa is Pro, provided Zaa is neither Pro nor hydroxyproline.. Gelatinase activity is inhibited by serine-protease inhibitors, such as phenylmethylsulfonyl fluoride (PMSF), 4-(2-aminoethyl)-benzenesulfonyl fluoride hydrochloride (AEBSF), 4-amidino phenylsulfonyl fluoride (APSF) and diisopropyl fluorophosphate (DFP), N-ethylmaleimide (NEM) and phenylmethylsulfonyl fluoride (PMSF). Dipeptidyl peptidase activity is inhibited by 2,2'-azino-bis(3-ethylbenzthiazoline-6-sulfonic acid), diisopropylfluorophosphate (DFP). Prolyl endopeptidase activity is inhibited by the boronic acid peptide Ac-Gly-BoroPro, Ac-Gly-Pro-chloromethyl ketone and Thr-Ser-Gly-chloromethyl ketone. In terms of biological role, cell surface glycoprotein serine protease that participates in extracellular matrix degradation and involved in many cellular processes including tissue remodeling, fibrosis, wound healing, inflammation and tumor growth. Both plasma membrane and soluble forms exhibit post-proline cleaving endopeptidase activity, with a marked preference for Ala/Ser-Gly-Pro-Ser/Asn/Ala consensus sequences, on substrate such as alpha-2-antiplasmin SERPINF2 and SPRY2. Degrade also gelatin, heat-denatured type I collagen, but not native collagen type I and IV, vibronectin, tenascin, laminin, fibronectin, fibrin or casein. Also has dipeptidyl peptidase activity, exhibiting the ability to hydrolyze the prolyl bond two residues from the N-terminus of synthetic dipeptide substrates provided that the penultimate residue is proline, with a preference for Ala-Pro, Ile-Pro, Gly-Pro, Arg-Pro and Pro-Pro. Natural neuropeptide hormones for dipeptidyl peptidase are the neuropeptide Y (NPY), peptide YY (PYY), substance P (TAC1) and brain natriuretic peptide 32 (NPPB). The plasma membrane form, in association with either DPP4, PLAUR or integrins, is involved in the pericellular proteolysis of the extracellular matrix (ECM), and hence promotes cell adhesion, migration and invasion through the ECM. Plays a role in tissue remodeling during development and wound healing. Participates in the cell invasiveness towards the ECM in malignant melanoma cancers. Enhances tumor growth progression by increasing angiogenesis, collagen fiber degradation and apoptosis and by reducing antitumor response of the immune system. Promotes glioma cell invasion through the brain parenchyma by degrading the proteoglycan brevican. Acts as a tumor suppressor in melanocytic cells through regulation of cell proliferation and survival in a serine protease activity-independent manner. This chain is Prolyl endopeptidase FAP, found in Mus musculus (Mouse).